Consider the following 216-residue polypeptide: Small ribosomal subunit protein uS5 (216 aa).

The 64-residue stretch at 51–114 (LEEEVIDVNL…DDAKFNIIKV (64 aa)) folds into the S5 DRBM domain.

It belongs to the universal ribosomal protein uS5 family. As to quaternary structure, part of the 30S ribosomal subunit. Contacts protein S4.

Its function is as follows. With S4 and S12 plays an important role in translational accuracy. The protein is Small ribosomal subunit protein uS5 of Methanothermobacter thermautotrophicus (strain ATCC 29096 / DSM 1053 / JCM 10044 / NBRC 100330 / Delta H) (Methanobacterium thermoautotrophicum).